The primary structure comprises 216 residues: Pyridoxine/pyridoxamine 5'-phosphate oxidase (216 aa).

Residues 12–15 and Lys70 each bind substrate; that span reads RREY. Residues 65–70, 80–81, Arg86, Lys87, and Gln109 contribute to the FMN site; these read RLVLLK and YT. Substrate-binding residues include Tyr127, Arg131, and Ser135. FMN is bound by residues 144 to 145 and Trp189; that span reads QS. 195-197 lines the substrate pocket; it reads RMH. Arg199 contributes to the FMN binding site.

The protein belongs to the pyridoxamine 5'-phosphate oxidase family. As to quaternary structure, homodimer. The cofactor is FMN.

The catalysed reaction is pyridoxamine 5'-phosphate + O2 + H2O = pyridoxal 5'-phosphate + H2O2 + NH4(+). It carries out the reaction pyridoxine 5'-phosphate + O2 = pyridoxal 5'-phosphate + H2O2. The protein operates within cofactor metabolism; pyridoxal 5'-phosphate salvage; pyridoxal 5'-phosphate from pyridoxamine 5'-phosphate: step 1/1. Its pathway is cofactor metabolism; pyridoxal 5'-phosphate salvage; pyridoxal 5'-phosphate from pyridoxine 5'-phosphate: step 1/1. Catalyzes the oxidation of either pyridoxine 5'-phosphate (PNP) or pyridoxamine 5'-phosphate (PMP) into pyridoxal 5'-phosphate (PLP). The polypeptide is Pyridoxine/pyridoxamine 5'-phosphate oxidase (Sodalis glossinidius (strain morsitans)).